The following is a 183-amino-acid chain: Peptidyl-tRNA hydrolase (183 aa).

A tRNA-binding site is contributed by Tyr14. Catalysis depends on His19, which acts as the Proton acceptor. TRNA-binding residues include Phe64 and Asn66.

The protein belongs to the PTH family. Monomer.

The protein localises to the cytoplasm. It carries out the reaction an N-acyl-L-alpha-aminoacyl-tRNA + H2O = an N-acyl-L-amino acid + a tRNA + H(+). Functionally, hydrolyzes ribosome-free peptidyl-tRNAs (with 1 or more amino acids incorporated), which drop off the ribosome during protein synthesis, or as a result of ribosome stalling. Catalyzes the release of premature peptidyl moieties from peptidyl-tRNA molecules trapped in stalled 50S ribosomal subunits, and thus maintains levels of free tRNAs and 50S ribosomes. The chain is Peptidyl-tRNA hydrolase from Syntrophomonas wolfei subsp. wolfei (strain DSM 2245B / Goettingen).